Consider the following 459-residue polypeptide: Inositol-trisphosphate 3-kinase A (459 aa).

Residues 1–29 (MTLPGRPTGMARPRGAGPCSPGLERAPRR) form a disordered region. An omega-N-methylarginine mark is found at R35, R55, and R62. A disordered region spans residues 49 to 164 (AAAGEPRARG…TSEDVGQKSH (116 aa)). Residues 116 to 132 (RRLSTSSLSSTGSSSLL) show a composition bias toward low complexity. A phosphoserine mark is found at S135 and S195. Residues S195, K207, 247–249 (QDL), and D260 contribute to the ATP site. Residues K262 and R283 each contribute to the substrate site. The segment at 285–293 (DMYKKMLAV) is calmodulin-binding. Residue 310–317 (KPRYMQWR) participates in substrate binding. Residues K334 and D414 each contribute to the ATP site. Residue K417 coordinates substrate.

Belongs to the inositol phosphokinase (IPK) family.

It localises to the cytoplasm. The protein localises to the cytoskeleton. The catalysed reaction is 1D-myo-inositol 1,4,5-trisphosphate + ATP = 1D-myo-inositol 1,3,4,5-tetrakisphosphate + ADP + H(+). Activated by calcium/calmodulin. Catalyzes the phosphorylation of 1D-myo-inositol 1,4,5-trisphosphate (InsP3) into 1D-myo-inositol 1,3,4,5-tetrakisphosphate and participates to the regulation of calcium homeostasis. The sequence is that of Inositol-trisphosphate 3-kinase A from Mus musculus (Mouse).